Consider the following 560-residue polypeptide: Alpha-keto-acid decarboxylase (560 aa).

Glutamate 61 contacts thiamine diphosphate. A thiamine pyrophosphate binding region spans residues 396 to 478 (TSFYGMADHR…VVVNNDGYTV (83 aa)). Aspartate 446, asparagine 473, and glycine 475 together coordinate Mg(2+).

This sequence belongs to the TPP enzyme family. The cofactor is a metal cation. Thiamine diphosphate is required as a cofactor.

Decarboxylates branched-chain and aromatic alpha-keto acids to aldehydes. The sequence is that of Alpha-keto-acid decarboxylase (kdc) from Mycobacterium tuberculosis (strain CDC 1551 / Oshkosh).